The chain runs to 1434 residues: Protein patched homolog 1 (1434 aa).

Residues 1–13 (MASAGNAAGALGR) are compositionally biased toward low complexity. The segment at 1–34 (MASAGNAAGALGRQAGGGRRRRTGGPHRAAPDRD) is disordered. Residues 1-86 (MASAGNAAGA…GCYIQKNCGK (86 aa)) are Cytoplasmic-facing. A helical transmembrane segment spans residues 87 to 107 (FLVVGLLIFGAFAVGLKAANL). Residues 108–422 (ETNVEELWVE…LDDILKSFSD (315 aa)) are Extracellular-facing. 4 N-linked (GlcNAc...) asparagine glycosylation sites follow: Asn-127, Asn-298, Asn-335, and Asn-400. A helical transmembrane segment spans residues 423–443 (VSVIRVASGYLLMLAYACLTM). The 161-residue stretch at 424-584 (SVIRVASGYL…LLIFPAILSM (161 aa)) folds into the SSD domain. At 444–458 (LRWDCSKSQGAVGLA) the chain is on the cytoplasmic side. A helical membrane pass occupies residues 459–479 (GVLLVALSVAAGLGLCSLIGI). Topologically, residues 480–487 (SFNAATTQ) are extracellular. The chain crosses the membrane as a helical span at residues 488-508 (VLPFLALGVGVDDVFLLAHAF). At 509–533 (SETGQNKRIPFEDRTGECLKRTGAS) the chain is on the cytoplasmic side. The chain crosses the membrane as a helical span at residues 534 to 554 (VALTSISNVTAFFMAALIPIP). Residues 555 to 563 (ALRAFSLQA) lie on the Extracellular side of the membrane. The chain crosses the membrane as a helical span at residues 564 to 584 (AVVVVFNFAMVLLIFPAILSM). Residues 585–734 (DLYRREDRRL…HYAPFLLKPK (150 aa)) are Cytoplasmic-facing. The helical transmembrane segment at 735-755 (AKVVVILLFLGLLGVSLYGTT) threads the bilayer. Residues 756–1013 (RVRDGLDLTD…WEQYISLRHW (258 aa)) lie on the Extracellular side of the membrane. 2 N-linked (GlcNAc...) asparagine glycosylation sites follow: Asn-861 and Asn-986. Residues 1014–1034 (LLLSISVVLACTFLVCAVFLL) form a helical membrane-spanning segment. At 1035–1039 (NPWTA) the chain is on the cytoplasmic side. A helical membrane pass occupies residues 1040–1060 (GIIVMVLALMTVELFGMMGLI). Topologically, residues 1061–1069 (GIKLSAVPV) are extracellular. The helical transmembrane segment at 1070 to 1090 (VILIASVGIGVEFTVHVALAF) threads the bilayer. The Cytoplasmic segment spans residues 1091–1107 (LTAIGDKNHRAMLALEH). A helical membrane pass occupies residues 1108 to 1128 (MFAPVLDGAVSTLLGVLMLAG). At 1129–1140 (SEFDFIVRYFFA) the chain is on the extracellular side. The helical transmembrane segment at 1141 to 1161 (VLAILTVLGVLNGLVLLPVLL) threads the bilayer. Residues 1162–1434 (SFFGPCPEVS…EERPWGSSSN (273 aa)) lie on the Cytoplasmic side of the membrane. Disordered stretches follow at residues 1175–1219 (GLNR…TVSG), 1257–1348 (HPDS…SSVP), and 1368–1396 (HPPP…HGVF). Thr-1181 carries the phosphothreonine modification. Residue Ser-1183 is modified to Phosphoserine. Residues 1204–1213 (SDSSDSEYSS) show a composition bias toward low complexity. Basic and acidic residues predominate over residues 1288 to 1297 (PRRDPPREGL). Polar residues predominate over residues 1335–1348 (PRNPTSTAMGSSVP). A Glycyl lysine isopeptide (Lys-Gly) (interchain with G-Cter in ubiquitin) cross-link involves residue Lys-1413.

It belongs to the patched family. Interacts with SNX17. Interacts with IHH. Interacts with G-protein coupled receptor GPR37L1. Glycosylation is necessary for SHH binding. In terms of processing, in the absence of Hh ligands, ubiquitination by ITCH at Lys-1413 promotes endocytosis and both proteasomal and lysosomal degradation. As to expression, detected in cerebellar Bergmann glia cells (at protein level). In the developing embryo, first detected within the ventral neural tube and later in the somites and limb buds. Expression in the limb buds is restricted to the posterior ectoderm surrounding the zone of polarizing activity. In the adult, expression is seen in brain, lung, liver, kidney and ocular tissues; lower levels in heart, skeletal muscle, and testis.

The protein localises to the cell membrane. Functionally, acts as a receptor for sonic hedgehog (SHH), indian hedgehog (IHH) and desert hedgehog (DHH). Associates with the smoothened protein (SMO) to transduce the hedgehog's proteins signal. Seems to have a tumor suppressor function, as inactivation of this protein is probably a necessary, if not sufficient step for tumorigenesis. The chain is Protein patched homolog 1 (Ptch1) from Mus musculus (Mouse).